The sequence spans 190 residues: Putative glutathione-dependent formaldehyde-activating enzyme (190 aa).

Residues 19-165 (FKGGKLYCHC…FRKEGLQTYD (147 aa)) form the CENP-V/GFA domain. The Zn(2+) site is built by cysteine 26, cysteine 28, cysteine 47, cysteine 49, cysteine 52, cysteine 94, and cysteine 97.

Belongs to the Gfa family. The cofactor is Zn(2+).

The catalysed reaction is S-(hydroxymethyl)glutathione = glutathione + formaldehyde. It functions in the pathway one-carbon metabolism; formaldehyde degradation; formate from formaldehyde (glutathione route): step 1/3. Functionally, catalyzes the condensation of formaldehyde and glutathione to S-hydroxymethylglutathione. This chain is Putative glutathione-dependent formaldehyde-activating enzyme, found in Phaeosphaeria nodorum (strain SN15 / ATCC MYA-4574 / FGSC 10173) (Glume blotch fungus).